The sequence spans 323 residues: Extracellular endo-alpha-(1-&gt;5)-L-arabinanase 1 (323 aa).

Positions 1–32 are cleaved as a signal peptide; sequence MKKKKTWKRFLHFSSAALAAGLIFTSAAPAEA. Residue D44 is the Proton acceptor of the active site. Position 44 (D44) interacts with substrate. Ca(2+) is bound at residue D107. Substrate contacts are provided by residues G125 and 160-163; that span reads NAID. E165 is a Ca(2+) binding site. 180–182 lines the substrate pocket; it reads SFW. The active-site Proton donor is E215. Residue D287 participates in Ca(2+) binding.

Belongs to the glycosyl hydrolase 43 family. The cofactor is Ca(2+).

It is found in the secreted. It catalyses the reaction Endohydrolysis of (1-&gt;5)-alpha-arabinofuranosidic linkages in (1-&gt;5)-arabinans.. Its pathway is glycan metabolism; L-arabinan degradation. In terms of biological role, involved in the degradation of arabinan and is a key enzyme in the complete degradation of the plant cell wall. Catalyzes the internal cleavage of alpha-(1-&gt;5)-L-arabinofuranosyl residues of linear 1,5-alpha-L-arabinan and of branched sugar beet arabinan. It displays no activity against heavily substituted arabinans or a range of other polysaccharides (larch wood arabinogalactan, wheat arabinoxylan and p-nitrophenyl-alpha-L-arabinofuranoside). The enzyme activity is progressively reduced as alpha-(1-&gt;5)-chains become shorter or more highly substituted. The sequence is that of Extracellular endo-alpha-(1-&gt;5)-L-arabinanase 1 (abnA) from Bacillus subtilis (strain 168).